A 22-amino-acid polypeptide reads, in one-letter code: NADH dehydrogenase [ubiquinone] 1 alpha subcomplex subunit 9 (22 aa).

The segment at 1–22 is disordered; that stretch reads ASNLATGGAGPLIXKGTGGRSS.

It belongs to the complex I NDUFA9 subunit family. As to quaternary structure, complex I is composed of about 45 different subunits. The cofactor is FAD.

Its subcellular location is the mitochondrion matrix. In terms of biological role, accessory subunit of the mitochondrial membrane respiratory chain NADH dehydrogenase (Complex I), that is believed not to be involved in catalysis. Complex I functions in the transfer of electrons from NADH to the respiratory chain. The immediate electron acceptor for the enzyme is believed to be ubiquinone. The sequence is that of NADH dehydrogenase [ubiquinone] 1 alpha subcomplex subunit 9 from Solanum tuberosum (Potato).